The sequence spans 143 residues: Nucleoside diphosphate kinase (143 aa).

The ATP site is built by Lys11, Phe59, Arg87, Thr93, Arg104, and Asn114. The Pros-phosphohistidine intermediate role is filled by His117.

Belongs to the NDK family. Homotetramer. Mg(2+) serves as cofactor.

It is found in the cytoplasm. It carries out the reaction a 2'-deoxyribonucleoside 5'-diphosphate + ATP = a 2'-deoxyribonucleoside 5'-triphosphate + ADP. The catalysed reaction is a ribonucleoside 5'-diphosphate + ATP = a ribonucleoside 5'-triphosphate + ADP. In terms of biological role, major role in the synthesis of nucleoside triphosphates other than ATP. The ATP gamma phosphate is transferred to the NDP beta phosphate via a ping-pong mechanism, using a phosphorylated active-site intermediate. The chain is Nucleoside diphosphate kinase from Azotobacter vinelandii (strain DJ / ATCC BAA-1303).